The sequence spans 345 residues: Transcription factor STKL1 (345 aa).

The disordered stretch occupies residues 1 to 145 (MASLENPAID…KKGHAQRVWS (145 aa)). Over residues 11-22 (SSSEFESSSEEI) the composition is skewed to low complexity. Positions 23 to 32 (SSSKESKPKE) are enriched in basic and acidic residues. Polar residues predominate over residues 37-46 (VPSTKTLNSP). Position 105 is a phosphoserine (Ser105). The span at 114 to 137 (RASEGTTSRDMHVKRIKKEGDNKK) shows a compositional bias: basic and acidic residues.

The protein belongs to the GeBP family. Expressed strongly in leaves and flowers, weakly in roots, and very weakly in stems.

It is found in the nucleus. Its function is as follows. Transcription repressor that binds DNA in a sequence-specific manner, 5'-GCCT-3', to regulate the expression of PGR. Acts as a modulatory component for the glucose-triggered developmental leaf growth process. The polypeptide is Transcription factor STKL1 (Arabidopsis thaliana (Mouse-ear cress)).